Consider the following 405-residue polypeptide: 4-hydroxy-3-methylbut-2-en-1-yl diphosphate synthase (flavodoxin) (405 aa).

[4Fe-4S] cluster contacts are provided by Cys-297, Cys-300, Cys-343, and Glu-350.

Belongs to the IspG family. It depends on [4Fe-4S] cluster as a cofactor.

The catalysed reaction is (2E)-4-hydroxy-3-methylbut-2-enyl diphosphate + oxidized [flavodoxin] + H2O + 2 H(+) = 2-C-methyl-D-erythritol 2,4-cyclic diphosphate + reduced [flavodoxin]. Its pathway is isoprenoid biosynthesis; isopentenyl diphosphate biosynthesis via DXP pathway; isopentenyl diphosphate from 1-deoxy-D-xylulose 5-phosphate: step 5/6. Converts 2C-methyl-D-erythritol 2,4-cyclodiphosphate (ME-2,4cPP) into 1-hydroxy-2-methyl-2-(E)-butenyl 4-diphosphate. This Francisella tularensis subsp. novicida (strain U112) protein is 4-hydroxy-3-methylbut-2-en-1-yl diphosphate synthase (flavodoxin).